The primary structure comprises 490 residues: 5-hydroxytryptamine receptor 3A (490 aa).

The first 19 residues, 1-19, serve as a signal peptide directing secretion; that stretch reads MVLWLQLALLALLLPTSLA. Residues 20 to 249 lie on the Extracellular side of the membrane; it reads QGEVRGKGTA…FYVVIRRRPL (230 aa). 4 N-linked (GlcNAc...) asparagine glycosylation sites follow: Asn-33, Asn-109, Asn-175, and Asn-191. A disulfide bridge connects residues Cys-162 and Cys-176. The chain crosses the membrane as a helical span at residues 250 to 270; it reads FYAVTLLLPSIFLMIVDIVGF. Residues 271–285 are Cytoplasmic-facing; sequence YLPPDSGERVSFKIT. Residues 286 to 306 traverse the membrane as a helical segment; sequence LLLGYSVFLIIVSDTLPATAI. Residues 307–312 are Extracellular-facing; it reads GTPLIS. Residues 313 to 333 form a helical membrane-spanning segment; it reads VYFVVCMALLVISLAETILIV. Residues 334–467 lie on the Cytoplasmic side of the membrane; it reads RLVHKQDLQQ…GSVLDKLLFR (134 aa). A disordered region spans residues 401–422; sequence GGPQDLEKTSRGRGSPPPPPRE. Residues 426–462 are HA-stretch; determines single-channel conductance in 5-HT3 receptors; that stretch reads AMCGLLQELASIRHFLEKREETREVARDWLRVGSVLD. Residues 468-488 traverse the membrane as a helical segment; that stretch reads VYLLAVLAYSITLVTLWSVWH. Residues 489-490 lie on the Extracellular side of the membrane; sequence YA.

This sequence belongs to the ligand-gated ion channel (TC 1.A.9) family. 5-hydroxytryptamine receptor (TC 1.A.9.2) subfamily. HTR3A sub-subfamily. Forms homopentameric as well as heteropentameric serotonin-activated cation-selective channel complexes with HTR3B or HTR3C or HTR3D or HTR3E. The homomeric complex is functional but exhibits low conductance with modified voltage dependence, and decreased agonist and antagonist affinity. Heteropentameric complexes display properties which resemble that of neuronal serotonin-activated channels in vivo. Interacts with RIC3. As to expression, expressed in cortex, intestine and liver. Not expressed in muscle or spleen.

The protein resides in the postsynaptic cell membrane. It is found in the cell membrane. The enzyme catalyses Na(+)(in) = Na(+)(out). It catalyses the reaction K(+)(in) = K(+)(out). The catalysed reaction is Ca(2+)(in) = Ca(2+)(out). It carries out the reaction Mg(2+)(in) = Mg(2+)(out). Forms serotonin (5-hydroxytryptamine/5-HT3)-activated cation-selective channel complexes, which when activated cause fast, depolarizing responses in neurons. This is 5-hydroxytryptamine receptor 3A from Cavia porcellus (Guinea pig).